A 311-amino-acid polypeptide reads, in one-letter code: Olfactory receptor 5L1 (311 aa).

Over methionine 1 to valine 25 the chain is Extracellular. Residue asparagine 5 is glycosylated (N-linked (GlcNAc...) asparagine). Residues cysteine 26–isoleucine 46 form a helical membrane-spanning segment. The Cytoplasmic portion of the chain corresponds to alanine 47–arginine 54. A helical transmembrane segment spans residues leucine 55–serine 75. Topologically, residues isoleucine 76–valine 99 are extracellular. A disulfide bridge connects residues cysteine 97 and cysteine 189. The chain crosses the membrane as a helical span at residues glutamine 100 to tyrosine 120. Residues aspartate 121 to lysine 139 lie on the Cytoplasmic side of the membrane. A helical transmembrane segment spans residues valine 140–leucine 160. Residues cysteine 161–glutamate 196 are Extracellular-facing. Asparagine 195 is a glycosylation site (N-linked (GlcNAc...) asparagine). The chain crosses the membrane as a helical span at residues threonine 197–serine 217. Residues tyrosine 218 to alanine 237 lie on the Cytoplasmic side of the membrane. Residues phenylalanine 238–isoleucine 258 traverse the membrane as a helical segment. Residues tyrosine 259 to aspartate 271 are Extracellular-facing. The chain crosses the membrane as a helical span at residues lysine 272 to leucine 292. The Cytoplasmic portion of the chain corresponds to arginine 293–serine 311.

It belongs to the G-protein coupled receptor 1 family.

The protein resides in the cell membrane. Odorant receptor. This chain is Olfactory receptor 5L1 (OR5L1), found in Homo sapiens (Human).